We begin with the raw amino-acid sequence, 1768 residues long: Callose synthase 11 (1768 aa).

Residues methionine 1 to leucine 308 are Cytoplasmic-facing. Residues tryptophan 309 to phenylalanine 329 form a helical membrane-spanning segment. Over proline 330 to aspartate 335 the chain is Extracellular. A helical transmembrane segment spans residues valine 336 to valine 356. The Cytoplasmic segment spans residues leucine 357–threonine 370. Residues tyrosine 371–phenylalanine 391 traverse the membrane as a helical segment. Topologically, residues serine 392–lysine 421 are extracellular. The chain crosses the membrane as a helical span at residues valine 422–isoleucine 442. The Cytoplasmic portion of the chain corresponds to arginine 443 to lysine 480. The helical transmembrane segment at tyrosine 481–isoleucine 501 threads the bilayer. Residues arginine 502–arginine 530 lie on the Extracellular side of the membrane. Residues isoleucine 531 to tryptophan 551 traverse the membrane as a helical segment. The Cytoplasmic portion of the chain corresponds to tyrosine 552–threonine 1341. The chain crosses the membrane as a helical span at residues threonine 1342 to glycine 1362. The Extracellular portion of the chain corresponds to arginine 1363 to glycine 1386. Residues alanine 1387–leucine 1407 traverse the membrane as a helical segment. The Cytoplasmic segment spans residues glutamate 1408 to arginine 1413. A helical transmembrane segment spans residues glycine 1414–tyrosine 1434. At threonine 1435–histidine 1481 the chain is on the extracellular side. The helical transmembrane segment at phenylalanine 1482–alanine 1502 threads the bilayer. The Cytoplasmic segment spans residues lysine 1503–tyrosine 1508. The chain crosses the membrane as a helical span at residues isoleucine 1509 to phenylalanine 1529. The Extracellular segment spans residues asparagine 1530–lysine 1583. A helical membrane pass occupies residues leucine 1584 to leucine 1604. At arginine 1605–serine 1612 the chain is on the cytoplasmic side. Residues isoleucine 1613–threonine 1633 form a helical membrane-spanning segment. Over isoleucine 1634–arginine 1649 the chain is Extracellular. A helical transmembrane segment spans residues phenylalanine 1650–threonine 1670. Residues lysine 1671–threonine 1673 lie on the Cytoplasmic side of the membrane. Residues valine 1674 to isoleucine 1694 form a helical membrane-spanning segment. Residues alanine 1695–aspartate 1719 are Extracellular-facing. A helical membrane pass occupies residues leucine 1720–glutamine 1740. The Cytoplasmic segment spans residues asparagine 1741–threonine 1768.

This sequence belongs to the glycosyltransferase 48 family. In terms of tissue distribution, ubiquitous.

Its subcellular location is the cell membrane. The catalysed reaction is [(1-&gt;3)-beta-D-glucosyl](n) + UDP-alpha-D-glucose = [(1-&gt;3)-beta-D-glucosyl](n+1) + UDP + H(+). Its function is as follows. Required the formation of the callose wall separating the tetraspores (interstitial wall), but not for the callose wall surrounding the pollen mother cells (peripheral wall). Functionally redudant to CALS12 (GSL5). During plant growth and development, callose is found as a transitory component of the cell plate in dividing cells, is a major component of pollen mother cell walls and pollen tubes, and is found as a structural component of plasmodesmatal canals. This is Callose synthase 11 (CALS11) from Arabidopsis thaliana (Mouse-ear cress).